The sequence spans 132 residues: Agouti-related protein (132 aa).

Positions 1–20 are cleaved as a signal peptide; it reads MLTAAVLSCALLLALPATRG. A propeptide spanning residues 21 to 82 is cleaved from the precursor; the sequence is AQMGLAPMEG…VLDLQDREPR (62 aa). Intrachain disulfides connect C87–C102, C94–C108, C101–C119, C105–C129, and C110–C117. Residues 87–129 enclose the Agouti domain; sequence CVRLHESCLGQQVPCCDPCATCYCRFFNAFCYCRKLGTAMNPC. Residues 111-113 are interaction with melanocortin receptors; sequence RFF.

In terms of assembly, interacts with melanocortin receptors MC3R, MC4R and MC5R. Expressed primarily in the adrenal gland, subthalamic nucleus, and hypothalamus, with a lower level of expression occurring in testis, lung, and kidney.

The protein localises to the secreted. The protein resides in the golgi apparatus lumen. In terms of biological role, plays a role in weight homeostasis. Involved in the control of feeding behavior through the central melanocortin system. Acts as alpha melanocyte-stimulating hormone antagonist by inhibiting cAMP production mediated by stimulation of melanocortin receptors within the hypothalamus and adrenal gland. Has very low activity with MC5R. Is an inverse agonist for MC3R and MC4R being able to suppress their constitutive activity. It promotes MC3R and MC4R endocytosis in an arrestin-dependent manner. The protein is Agouti-related protein (AGRP) of Homo sapiens (Human).